A 92-amino-acid chain; its full sequence is MATTYEEFSAKLDRLDQEFNRKMQEQNAKFFADKPDESTLSPEMREHYEKFERMIKEHTEKFNKKMHEHSEHFKQKFAELLEQQKAAQYPSK.

R45 carries the post-translational modification Omega-N-methylarginine.

It belongs to the KMP-11 family. Monomer. Post-translationally, a minor in vivo processed fragment (IVP) also exists, probably as a result of proteolysis. In terms of processing, probably O-glycosylated. Contains equimolar amounts of galactosamine, galactose, glucose and mannose. The N-terminus is blocked.

The protein localises to the cytoplasm. It localises to the cytoskeleton. In terms of biological role, may be involved in the regulation of the cytoskeleton through interaction with the subpellicular microtubules. May be involved in parasite mobility and attachment to the surface of the host cell. Strongly stimulates T-cell proliferation and is thought to play a role in the immunology of leishmaniasis. The chain is Kinetoplastid membrane protein 11 (KMP-11) from Leishmania donovani.